The primary structure comprises 360 residues: MLVWLAEYLTQFESAFNVFSYLTLRAILSVLTALVLSLWLGPTLIRRLQRLQIGQTVRDDGPESHLVKSGTPTMGGVLILAAVLGSSLLWADLDNRYVWVVLLVTTGFGIVGFVDDYRKVVRKDPKGLIAKWKYFWQSVIASVAAVYLYWSSTQGAETALLVPFFKDVMPQLGMLYMLMAYFVIVGTSNAVNLTDGLDGLAIMPTIMVAAALGIFAYVSGNVNFAEYLQIPYLPLTAELLVVCTAIVGAGLGFLWFNTYPALVFMGDVGSLALGAALGIIAILVRQELVLFIMGGVFVMETLSVMLQVGSYKLRGKRVFRMAPIHHHYELKGWPEPRVIVRFWILSLIFVLIGLATLKLR.

Helical transmembrane passes span 25 to 45, 73 to 93, 97 to 117, 128 to 148, 168 to 188, 199 to 219, 236 to 256, 262 to 282, 288 to 308, and 338 to 358; these read RAILSVLTALVLSLWLGPTLI, TMGGVLILAAVLGSSLLWADL, YVWVVLLVTTGFGIVGFVDDY, LIAKWKYFWQSVIASVAAVYL, VMPQLGMLYMLMAYFVIVGTS, GLAIMPTIMVAAALGIFAYVS, TAELLVVCTAIVGAGLGFLWF, LVFMGDVGSLALGAALGIIAI, LVLFIMGGVFVMETLSVMLQV, and VIVRFWILSLIFVLIGLATLK.

It belongs to the glycosyltransferase 4 family. MraY subfamily. Mg(2+) serves as cofactor.

The protein resides in the cell inner membrane. It catalyses the reaction UDP-N-acetyl-alpha-D-muramoyl-L-alanyl-gamma-D-glutamyl-meso-2,6-diaminopimeloyl-D-alanyl-D-alanine + di-trans,octa-cis-undecaprenyl phosphate = di-trans,octa-cis-undecaprenyl diphospho-N-acetyl-alpha-D-muramoyl-L-alanyl-D-glutamyl-meso-2,6-diaminopimeloyl-D-alanyl-D-alanine + UMP. The protein operates within cell wall biogenesis; peptidoglycan biosynthesis. Catalyzes the initial step of the lipid cycle reactions in the biosynthesis of the cell wall peptidoglycan: transfers peptidoglycan precursor phospho-MurNAc-pentapeptide from UDP-MurNAc-pentapeptide onto the lipid carrier undecaprenyl phosphate, yielding undecaprenyl-pyrophosphoryl-MurNAc-pentapeptide, known as lipid I. This is Phospho-N-acetylmuramoyl-pentapeptide-transferase from Idiomarina loihiensis (strain ATCC BAA-735 / DSM 15497 / L2-TR).